A 766-amino-acid chain; its full sequence is Serine/threonine-protein kinase B-raf (766 aa).

Gly residues predominate over residues 1–13 (MAALSGGGGGGAE). Residues 1–38 (MAALSGGGGGGAEPGQALFNGDMEPEAGAGAGAAASSA) are disordered. An N-acetylalanine modification is found at alanine 2. Serine 151 carries the phosphoserine modification. An RBD domain is found at 155 to 227 (PIVRVFLPNK…TGEELHVEVL (73 aa)). The Phorbol-ester/DAG-type zinc-finger motif lies at 234-280 (THNFVRKTFFTLAFCDFCRKLLFQGFRCQTCGYKFHQRCSTEVPLMC). Histidine 235, cysteine 248, cysteine 251, cysteine 261, cysteine 264, histidine 269, cysteine 272, and cysteine 280 together coordinate Zn(2+). A disordered region spans residues 308 to 454 (AETALTSGSS…DSSDDWEIPD (147 aa)). The segment covering 314–341 (SGSSPSAPASDSIGPQILTSPSPSKSIP) has biased composition (low complexity). Serine 333 carries the phosphoserine modification. Positions 348 to 363 (PADEDHRNQFGQRDRS) are enriched in basic and acidic residues. At serine 365 the chain carries Phosphoserine; by SGK1. A Phosphothreonine; by autocatalysis modification is found at threonine 373. Threonine 396 carries the post-translational modification Phosphothreonine. At serine 399 the chain carries Phosphoserine. Phosphothreonine is present on threonine 401. Positions 423–447 (QRERKSSSSSEDRNRMKTLGRRDSS) are enriched in basic and acidic residues. Phosphoserine is present on residues serine 446 and serine 447. In terms of domain architecture, Protein kinase spans 457–717 (ITVGQRIGSG…PQILASIELL (261 aa)). ATP-binding positions include 463-471 (IGSGSFGTV) and lysine 483. Aspartate 576 serves as the catalytic Proton acceptor. A Glycyl lysine isopeptide (Lys-Gly) (interchain with G-Cter in ubiquitin) cross-link involves residue lysine 578. An Omega-N-methylarginine; by PRMT5 modification is found at arginine 671. A phosphoserine mark is found at serine 729 and serine 750. Position 753 is a phosphothreonine; by MAPK1 (threonine 753).

This sequence belongs to the protein kinase superfamily. TKL Ser/Thr protein kinase family. RAF subfamily. Monomer. Homodimer. Heterodimerizes with RAF1, and the heterodimer possesses a highly increased kinase activity compared to the respective homodimers or monomers. Heterodimerization is mitogen-regulated and enhanced by 14-3-3 proteins. MAPK1/ERK2 activation can induce a negative feedback that promotes the dissociation of the heterodimer by phosphorylating BRAF at Thr-753. Heterodimerizes (via N-terminus) with KSR1 (via N-terminus) or KSR2 (via N-terminus) in a MAP2K1-dependent manner. Interacts with MAP2K1 and MAP2K2. Found in a complex with at least BRAF, HRAS, MAP2K1, MAPK3 and RGS14. Interacts with RIT1. Interacts (via N-terminus) with RGS14 (via RBD domains); the interaction mediates the formation of a ternary complex with RAF1, a ternary complex inhibited by GNAI1. Interacts with DGKH. Interacts with PRMT5. Interacts with KSR2. Interacts with AKAP13, MAP2K1 and KSR1. Identified in a complex with AKAP13, MAP2K1 and KSR1. Interacts with FNIP1 and FNIP2. Zn(2+) is required as a cofactor. Phosphorylation at Ser-365 by SGK1 inhibits its activity. Phosphorylation at Thr-753 by MAPK1. Dephosphorylation of Ser-365 by the SHOC2-MRAS-PP1c (SMP) complex consisting of SHOC2, GTP-bound M-Ras/MRAS and the catalytic subunit of protein phosphatase 1 (PPP1CA, PPP1CB or PPP1CC); this relieves inactivation and stimulates kinase activity. In terms of processing, methylation at Arg-671 decreases stability and kinase activity. Post-translationally, ubiquitinated by RNF149; which leads to proteasomal degradation. Polyubiquitinated at Lys-578 in response to EGF. Brain and testis.

The protein resides in the nucleus. It is found in the cytoplasm. It localises to the cell membrane. It catalyses the reaction L-seryl-[protein] + ATP = O-phospho-L-seryl-[protein] + ADP + H(+). The enzyme catalyses L-threonyl-[protein] + ATP = O-phospho-L-threonyl-[protein] + ADP + H(+). With respect to regulation, in quiescent cells, maintained in an inactive state via an intramolecular interaction between the protein kinase and N-terminal domains. Following mitogen-mediated cell activation, binds via its RGB domain to active HRAS (GTP-bound) which releases the inhibitory intramolecular interaction between the two domains. This allows the MAP2K1-mediated dimerization of KSR1 or KSR2, and BRAF which activates BRAF. Functionally, protein kinase involved in the transduction of mitogenic signals from the cell membrane to the nucleus. Phosphorylates MAP2K1, and thereby activates the MAP kinase signal transduction pathway. Phosphorylates PFKFB2. May play a role in the postsynaptic responses of hippocampal neurons. The sequence is that of Serine/threonine-protein kinase B-raf from Homo sapiens (Human).